A 1484-amino-acid chain; its full sequence is Chromosome partition protein MukB (1484 aa).

34–41 (GGNGAGKS) contacts ATP. 3 coiled-coil regions span residues 326–418 (LEAD…QYNQ), 444–472 (LDTF…QTAH), and 509–602 (RHLA…QRAP). The interval 666–783 (PGGAEDQRLN…SLPIFGRAAR (118 aa)) is flexible hinge. Coiled-coil stretches lie at residues 835–923 (EAEI…AKLE), 977–1116 (EMLS…AKAG), and 1209–1265 (VEAI…LQSV). Residues 1049–1074 (ADSGAEERARQRRDELHAQLSNNRSR) are disordered. Over residues 1051–1065 (SGAEERARQRRDELH) the composition is skewed to basic and acidic residues.

It belongs to the SMC family. MukB subfamily. Homodimerization via its hinge domain. Binds to DNA via its C-terminal region. Interacts, and probably forms a ternary complex, with MukE and MukF via its C-terminal region. The complex formation is stimulated by calcium or magnesium. Interacts with tubulin-related protein FtsZ.

It localises to the cytoplasm. The protein resides in the nucleoid. Plays a central role in chromosome condensation, segregation and cell cycle progression. Functions as a homodimer, which is essential for chromosome partition. Involved in negative DNA supercoiling in vivo, and by this means organize and compact chromosomes. May achieve or facilitate chromosome segregation by condensation DNA from both sides of a centrally located replisome during cell division. The polypeptide is Chromosome partition protein MukB (Salmonella dublin (strain CT_02021853)).